The following is a 277-amino-acid chain: Ubiquitin-conjugating enzyme suppressor 1 (277 aa).

The segment at 254-277 is disordered; it reads RTLACPDETNDNRGSEHYTKRKKI.

Its function is as follows. Not known; its elevated expression suppresses the conditional cell cycle defects associated with UBC3/CDC34 mutations. The protein is Ubiquitin-conjugating enzyme suppressor 1 (UBS1) of Saccharomyces cerevisiae (strain ATCC 204508 / S288c) (Baker's yeast).